Here is a 350-residue protein sequence, read N- to C-terminus: Transmembrane protein 115 (350 aa).

Over 1 to 19 (MQRALPGARQHLGAILASA) the chain is Cytoplasmic. The interval 1–205 (MQRALPGARQ…FGLLSSWVYL (205 aa)) is mediates homooligomerization. A helical membrane pass occupies residues 20-40 (SVVVKALCAVVLFLYLLSFAV). Residues 41–97 (DTGCLAVTPGYLFPPNFWIWTLATHGLMEQHVWDVAISLATVVVAGRLLEPLWGALE) lie on the Lumenal side of the membrane. Residues 98 to 118 (LLIFFSVVNVSVGLLGALAYL) traverse the membrane as a helical segment. Residues 119–126 (LTYMASFN) lie on the Cytoplasmic side of the membrane. Residues 127–147 (LVYLFTIRIHGALGFLGGVLV) form a helical membrane-spanning segment. Over 148 to 165 (ALKQTMGDCVVLRVPQVR) the chain is Lumenal. The helical transmembrane segment at 166 to 186 (VSVVPMLLLALLLLLRLATLL) threads the bilayer. The Cytoplasmic portion of the chain corresponds to 187–350 (QSPALASYGF…LITLETAPLL (164 aa)). The interval 206-229 (RFYQRHSRGRGDMADHFAFATFFP) is mediates localization to the Golgi. Residues 299-350 (EDQSAWPSMDDDEEEAGAKTDSPLPLEEASTPPGKVTVPESSLITLETAPLL) are disordered. Thr-329 bears the Phosphothreonine mark.

The protein belongs to the TMEM115 family. In terms of assembly, homooligomer. Interacts with COPB1. May interact with LMAN1. Interacts with the COG complex; probably through COG3.

It localises to the golgi apparatus. Its subcellular location is the golgi stack membrane. Functionally, may play a role in retrograde transport of proteins from the Golgi to the endoplasmic reticulum. May indirectly play a role in protein glycosylation in the Golgi. This Mus musculus (Mouse) protein is Transmembrane protein 115.